The primary structure comprises 396 residues: Probable sugar efflux transporter (396 aa).

Residues 1-14 are Cytoplasmic-facing; sequence MTTNTVSRKVAWLR. A helical membrane pass occupies residues 15–35; the sequence is VVTLAVAAFIFNTTEFVPVGL. Residues 36–49 lie on the Periplasmic side of the membrane; sequence LSDIAQSFHMQTAQ. The helical transmembrane segment at 50–70 threads the bilayer; the sequence is VGIMLTIYAWVVALMSLPFML. Topologically, residues 71 to 80 are cytoplasmic; it reads MTSQVERRKL. Residues 81–101 traverse the membrane as a helical segment; sequence LICLFVVFIASHVLSFLSWSF. Position 102 (T102) is a topological domain, periplasmic. A helical membrane pass occupies residues 103 to 123; sequence VLVISRIGVAFAHAIFWSITA. Residues 124–135 are Cytoplasmic-facing; it reads SLAIRMAPAGKR. The chain crosses the membrane as a helical span at residues 136–156; the sequence is AQALSLIATGTALAMVLGLPL. Residues 157–169 are Periplasmic-facing; sequence GRIVGQYFGWRMT. The helical transmembrane segment at 170–190 threads the bilayer; the sequence is FFAIGIGALVTLLCLIKLLPL. Over 191 to 208 the chain is Cytoplasmic; the sequence is LPSEHSGSLKSLPLLFRR. Residues 209–229 traverse the membrane as a helical segment; it reads PALMSIYLLTVVVVTAHYTAY. Residues 230 to 245 are Periplasmic-facing; the sequence is SYIEPFVQNIAGFSAN. The helical transmembrane segment at 246 to 266 threads the bilayer; that stretch reads FATALLLLLGGAGIIGSVIFG. Residues 267–274 are Cytoplasmic-facing; the sequence is KLGNQYAS. A helical membrane pass occupies residues 275–295; the sequence is ALVSTAIALLLVCLALLLPAA. The Periplasmic portion of the chain corresponds to 296–298; sequence NSE. Residues 299-319 form a helical membrane-spanning segment; the sequence is IHLGVLSIFWGIAMMIIGLGM. At 320-332 the chain is on the cytoplasmic side; sequence QVKVLALAPDATD. A helical membrane pass occupies residues 333 to 353; it reads VAMALFSGIFNIGIGAGALVG. Over 354–363 the chain is Periplasmic; it reads NQVSLHWSMS. The helical transmembrane segment at 364–384 threads the bilayer; it reads MIGYVGAVPAFAALIWSIIIF. The Cytoplasmic segment spans residues 385–396; sequence RRWPVTLEEQTQ.

Belongs to the major facilitator superfamily. SotB (TC 2.A.1.2) family.

It is found in the cell inner membrane. Functionally, involved in the efflux of sugars. The physiological role may be the reduction of the intracellular concentration of toxic sugars or sugar metabolites. This chain is Probable sugar efflux transporter, found in Shigella flexneri.